The following is a 332-amino-acid chain: Solute carrier family 25 member 16 (332 aa).

Solcar repeat units lie at residues 34 to 120 (FYWL…YKTF), 128 to 216 (SGHV…LKSV), and 238 to 328 (LKTH…MKQF). 6 consecutive transmembrane segments (helical) span residues 37–57 (LRSFLAGGIAGCCAKTTVAPL), 88–108 (GYLGLYKGNGAMMIRIFPYGA), 134–154 (LMAGSMAGMTAVICTYPLDVV), 191–211 (GLMPTILGMAPYAGVSFFTFG), 244–264 (LLCGGVAGAIAQTISYPFDVT), and 299–319 (GLYRGLSLNYIRCIPSQAVAF).

The protein belongs to the mitochondrial carrier (TC 2.A.29) family.

The protein localises to the mitochondrion inner membrane. Functionally, may be involved in the transport of coenzyme A in the mitochondrial matrix. Very little is known about the physiological function of this carrier. This Mus musculus (Mouse) protein is Solute carrier family 25 member 16.